A 583-amino-acid chain; its full sequence is Threonine--tRNA ligase (583 aa).

The segment at 185-478 (DHRKLGRELN…LVEHYGGAFP (294 aa)) is catalytic. Positions 278, 329, and 455 each coordinate Zn(2+).

The protein belongs to the class-II aminoacyl-tRNA synthetase family. In terms of assembly, homodimer. Requires Zn(2+) as cofactor.

It localises to the cytoplasm. The enzyme catalyses tRNA(Thr) + L-threonine + ATP = L-threonyl-tRNA(Thr) + AMP + diphosphate + H(+). Functionally, catalyzes the attachment of threonine to tRNA(Thr) in a two-step reaction: L-threonine is first activated by ATP to form Thr-AMP and then transferred to the acceptor end of tRNA(Thr). Also edits incorrectly charged L-seryl-tRNA(Thr). The protein is Threonine--tRNA ligase of Borrelia recurrentis (strain A1).